The following is a 322-amino-acid chain: Transcriptional activator protein Pur-alpha (322 aa).

The interval 1 to 55 (MADRDSGSEQGGAALGSGGSLGHPGSGSGSGGGGGGGGGGGGSGGGGGGAPGGLQ) is disordered. At Ala-2 the chain carries N-acetylalanine. Residues 9–52 (EQGGAALGSGGSLGHPGSGSGSGGGGGGGGGGGGSGGGGGGAPG) show a composition bias toward gly residues. Residues 60–125 (ELASKRVDIQ…DFIEHYAQLG (66 aa)) form a PUR repeat I repeat. The PUR repeat II repeat unit spans residues 142 to 213 (ALKSEFLVRE…KLIDDYGVEE (72 aa)). A Phosphoserine modification is found at Ser-182. The stretch at 215 to 281 (PAELPEGTSL…CKYSEEMKKI (67 aa)) is one PUR repeat III repeat. The span at 295 to 314 (LHQQQQQQQEETAAATLLLQ) shows a compositional bias: low complexity. The segment at 295–322 (LHQQQQQQQEETAAATLLLQGEEEGEED) is disordered.

Belongs to the PUR DNA-binding protein family. Homodimer, heterodimer with PURB and heterotrimer with PURB and YBX1/Y-box protein 1. Interacts with FMR1; this interaction occurs in association with polyribosome.

The protein localises to the nucleus. Its function is as follows. This is a probable transcription activator that specifically binds the purine-rich single strand of the PUR element located upstream of the MYC gene. May play a role in the initiation of DNA replication and in recombination. The sequence is that of Transcriptional activator protein Pur-alpha (PURA) from Homo sapiens (Human).